A 95-amino-acid chain; its full sequence is Putative membrane protein insertion efficiency factor (95 aa).

It belongs to the UPF0161 family.

It is found in the cell membrane. Its function is as follows. Could be involved in insertion of integral membrane proteins into the membrane. The protein is Putative membrane protein insertion efficiency factor of Lactobacillus delbrueckii subsp. bulgaricus (strain ATCC 11842 / DSM 20081 / BCRC 10696 / JCM 1002 / NBRC 13953 / NCIMB 11778 / NCTC 12712 / WDCM 00102 / Lb 14).